The following is a 402-amino-acid chain: UPF0261 protein y4oU (402 aa).

The protein belongs to the UPF0261 family.

The sequence is that of UPF0261 protein y4oU from Sinorhizobium fredii (strain NBRC 101917 / NGR234).